Consider the following 356-residue polypeptide: MTKHIAILRGDGIGPEIVAETVRVLDKLIAQGLDVGYEYAPLGGEAYDEYGHPYPEFTQNLCRKADAVLLGAVGSPQYDNLDRPLRPERGLLAIRKDLNLFANLRPAILYPELANASTLKSEIVAGLDILIVRELTGDIYFGEPRGIRVLENGEREGYNTMKYSESEIRRIAHVAFQSAQKRSKKVCSVGKANVLETTELWREIFEEIGKEYPDVELSHMYVDNAAMQLVRAPKQFDVIATGNIFGDILSDEASMLTGSIGMLPSASLDENGKGLYEPSHGSAPDIAGQNKANPLATVLSLAMLLRYSLNDEARAQQVENAVQKVLQQGLRTGDIYEEGTKLVSCSEMGDAVLATL.

Residues Arg-95, Arg-105, Arg-133, and Asp-223 each coordinate substrate. Asp-223, Asp-247, and Asp-251 together coordinate Mg(2+). 281 to 293 (GSAPDIAGQNKAN) contributes to the NAD(+) binding site.

It belongs to the isocitrate and isopropylmalate dehydrogenases family. LeuB type 1 subfamily. As to quaternary structure, homodimer. Mg(2+) serves as cofactor. Mn(2+) is required as a cofactor.

Its subcellular location is the cytoplasm. It carries out the reaction (2R,3S)-3-isopropylmalate + NAD(+) = 4-methyl-2-oxopentanoate + CO2 + NADH. It functions in the pathway amino-acid biosynthesis; L-leucine biosynthesis; L-leucine from 3-methyl-2-oxobutanoate: step 3/4. Catalyzes the oxidation of 3-carboxy-2-hydroxy-4-methylpentanoate (3-isopropylmalate) to 3-carboxy-4-methyl-2-oxopentanoate. The product decarboxylates to 4-methyl-2 oxopentanoate. This Neisseria meningitidis serogroup A / serotype 4A (strain DSM 15465 / Z2491) protein is 3-isopropylmalate dehydrogenase.